A 392-amino-acid chain; its full sequence is Alanine racemase 2 (392 aa).

Residue K40 is the Proton acceptor; specific for D-alanine of the active site. The residue at position 40 (K40) is an N6-(pyridoxal phosphate)lysine. Residue R138 coordinates substrate. The active-site Proton acceptor; specific for L-alanine is the Y266. A substrate-binding site is contributed by M314.

The protein belongs to the alanine racemase family. Requires pyridoxal 5'-phosphate as cofactor.

The enzyme catalyses L-alanine = D-alanine. It functions in the pathway amino-acid biosynthesis; D-alanine biosynthesis; D-alanine from L-alanine: step 1/1. Its function is as follows. Catalyzes the interconversion of L-alanine and D-alanine. May also act on other amino acids. This is Alanine racemase 2 (alr2) from Oceanobacillus iheyensis (strain DSM 14371 / CIP 107618 / JCM 11309 / KCTC 3954 / HTE831).